Here is a 268-residue protein sequence, read N- to C-terminus: 5'-nucleotidase SurE (268 aa).

A divalent metal cation is bound by residues Asp8, Asp9, Ser40, and Asn98.

This sequence belongs to the SurE nucleotidase family. Requires a divalent metal cation as cofactor.

Its subcellular location is the cytoplasm. It carries out the reaction a ribonucleoside 5'-phosphate + H2O = a ribonucleoside + phosphate. Functionally, nucleotidase that shows phosphatase activity on nucleoside 5'-monophosphates. The protein is 5'-nucleotidase SurE of Trichodesmium erythraeum (strain IMS101).